A 332-amino-acid polypeptide reads, in one-letter code: Long form salivary protein D7L2 (332 aa).

The signal sequence occupies residues 1–21 (MFPPRKFLLSSFILAALHVTA). 2 disulfides stabilise this stretch: Cys40-Cys77 and Cys73-Cys133. Trp61 provides a ligand contact to leukotriene E4. 2 residues coordinate leukotriene E4: Gly157 and Lys176. 3 disulfide bridges follow: Cys184-Cys219, Cys200-Cys331, and Cys259-Cys278. 3 residues coordinate noradrenaline: Glu185, Arg203, and His216. Asp294 and Glu297 together coordinate noradrenaline.

It belongs to the PBP/GOBP family. Interacts with human CD4. In terms of tissue distribution, saliva (at protein level). Female salivary gland (at protein level). Detected in the head and thorax of the female mosquitoes, where the salivary glands are located.

It localises to the secreted. Functionally, modulates blood feeding of female mosquitoes on vertebrate species by binding and sequestering different mediators involved in the host response, such as biogenic amines and eicosanoids. Binds serotonin, histamine, tryptamine, noradrenaline, leukotriene B4, leukotriene C4, leukotriene D4, leukotriene E4 and U-46619, a stable analog of thromboxane A2. Does not bind adrenaline. Exhibits vasodilating activity. Inhibits agonist-induced platelet aggregation but not blood clotting. In terms of biological role, (Microbial infection) Probably promotes Plasmodium gallinaceum oocyst development in mosquito midgut. The polypeptide is Long form salivary protein D7L2 (Aedes aegypti (Yellowfever mosquito)).